The sequence spans 503 residues: ESX-5 secretion system protein EccD5 (503 aa).

Helical transmembrane passes span 137–157 (VVAV…ASGV), 169–189 (LTTI…MMLL), 200–220 (VADI…ASAP), 224–244 (VGSP…ALAL), 250–270 (RLAI…ASLS), 272–292 (MVAA…CVVM), 359–379 (FLSG…TSLC), 414–434 (ITLA…YALV), 443–463 (IVAS…AVVP), and 480–500 (YLCL…YAAI).

This sequence belongs to the EccD/Snm4 family. Part of the ESX-5 / type VII secretion system (T7SS), which is composed of cytosolic and membrane components. The ESX-5 membrane complex is composed of EccB5, EccC5, EccD5 and EccE5.

Its subcellular location is the cell inner membrane. In terms of biological role, part of the ESX-5 specialized secretion system, which is responsible for the secretion of EsxN and a number of PE_PGRS and PPE proteins. This component is essential for ESX-5 complex stability and secretion. In Mycobacterium marinum (strain ATCC BAA-535 / M), this protein is ESX-5 secretion system protein EccD5.